We begin with the raw amino-acid sequence, 994 residues long: Chromatin modification-related protein vid21 (994 aa).

Disordered regions lie at residues 122–275 and 288–308; these read PDNL…APPV and PKVD…ENDV. Composition is skewed to basic and acidic residues over residues 158-171, 178-191, 204-233, 254-265, and 288-305; these read TIHK…KETI, KEVE…EEKG, LTEE…KEHE, VESKEVKKKEVS, and PKVD…KVTE. A phosphoserine mark is found at Ser-298 and Ser-378. The HSA domain occupies 475–548; the sequence is PKRQNEMPRL…SKNKKPYMQE (74 aa). The disordered stretch occupies residues 671 to 693; sequence SFMEKKARSDENQLDGNKIKDDN. Over residues 672-693 the composition is skewed to basic and acidic residues; it reads FMEKKARSDENQLDGNKIKDDN. The 61-residue stretch at 713-773 folds into the Myb-like domain; it reads KDIRPEAPWL…DCFERWIQVD (61 aa). Disordered stretches follow at residues 857 to 880 and 975 to 994; these read TMTK…PSPL and EQIH…ERTQ. The stretch at 880–912 forms a coiled coil; sequence LELSRLKSEREAQIQQIQAQRNFAQLQSQNRAL.

The protein belongs to the EAF1 family. Component of the NuA4 histone acetyltransferase complex.

Its subcellular location is the nucleus. Component of the NuA4 histone acetyltransferase complex which is involved in transcriptional activation of selected genes principally by acetylation of nucleosomal histone H4 and H2A. The NuA4 complex is also involved in DNA repair. The chain is Chromatin modification-related protein vid21 (vid21) from Schizosaccharomyces pombe (strain 972 / ATCC 24843) (Fission yeast).